We begin with the raw amino-acid sequence, 120 residues long: UPF0231 protein YacL (120 aa).

The protein belongs to the UPF0231 family.

This chain is UPF0231 protein YacL (yacL), found in Shigella flexneri.